The sequence spans 405 residues: Imidazolonepropionase (405 aa).

Histidine 73 and histidine 75 together coordinate Fe(3+). Positions 73 and 75 each coordinate Zn(2+). Positions 82, 145, and 178 each coordinate 4-imidazolone-5-propanoate. Tyrosine 145 provides a ligand contact to N-formimidoyl-L-glutamate. Histidine 243 contributes to the Fe(3+) binding site. Position 243 (histidine 243) interacts with Zn(2+). Glutamine 246 serves as a coordination point for 4-imidazolone-5-propanoate. Aspartate 318 contacts Fe(3+). Aspartate 318 contacts Zn(2+). Residues asparagine 320 and glycine 322 each coordinate N-formimidoyl-L-glutamate. Threonine 323 lines the 4-imidazolone-5-propanoate pocket.

Belongs to the metallo-dependent hydrolases superfamily. HutI family. Requires Zn(2+) as cofactor. Fe(3+) serves as cofactor.

The protein localises to the cytoplasm. It carries out the reaction 4-imidazolone-5-propanoate + H2O = N-formimidoyl-L-glutamate. The protein operates within amino-acid degradation; L-histidine degradation into L-glutamate; N-formimidoyl-L-glutamate from L-histidine: step 3/3. Functionally, catalyzes the hydrolytic cleavage of the carbon-nitrogen bond in imidazolone-5-propanoate to yield N-formimidoyl-L-glutamate. It is the third step in the universal histidine degradation pathway. This chain is Imidazolonepropionase, found in Brucella suis biovar 1 (strain 1330).